The sequence spans 208 residues: Guanylate kinase (208 aa).

The Guanylate kinase-like domain occupies 4–185 (GNLYILSAPS…ALADFQAILR (182 aa)). Residue 11–18 (APSGAGKS) coordinates ATP.

Belongs to the guanylate kinase family.

The protein resides in the cytoplasm. The enzyme catalyses GMP + ATP = GDP + ADP. In terms of biological role, essential for recycling GMP and indirectly, cGMP. This is Guanylate kinase (gmk) from Pasteurella multocida (strain Pm70).